A 243-amino-acid chain; its full sequence is Homeobox protein goosecoid isoform B (243 aa).

Residues 148–207 (KRRHRTIFTDEQLEALENLFQETKYPDVGTREQLARRVHLREEKVEVWFKNRRAKWRRQK) constitute a DNA-binding region (homeobox). The interval 201–243 (AKWRRQKRSSSEESENAQKWNKSSKNSAEKRDEQAKSDLDSDS) is disordered. A compositionally biased stretch (polar residues) spans 217-226 (AQKWNKSSKN). The segment covering 227-243 (SAEKRDEQAKSDLDSDS) has biased composition (basic and acidic residues).

The protein belongs to the paired homeobox family. Bicoid subfamily.

The protein localises to the nucleus. Its function is as follows. Plays a central role in executing Spemann's organizer phenomenon (the dorsal blastopore lip of the early Xenopus laevis gastrula can organize a complete secondary body axis when transplanted to another embryo). This is Homeobox protein goosecoid isoform B (gsc-b) from Xenopus laevis (African clawed frog).